Here is a 365-residue protein sequence, read N- to C-terminus: Probable L-tyrosine/L-aspartate decarboxylase (365 aa).

Position 225 is an N6-(pyridoxal phosphate)lysine (lysine 225).

This sequence belongs to the group II decarboxylase family. MfnA subfamily. The cofactor is pyridoxal 5'-phosphate.

It catalyses the reaction L-tyrosine + H(+) = tyramine + CO2. The enzyme catalyses L-aspartate + H(+) = beta-alanine + CO2. It participates in cofactor biosynthesis; methanofuran biosynthesis. Its pathway is cofactor biosynthesis; coenzyme A biosynthesis. In terms of biological role, catalyzes the decarboxylation of L-tyrosine to produce tyramine for methanofuran biosynthesis. Can also catalyze the decarboxylation of L-aspartate to produce beta-alanine for coenzyme A (CoA) biosynthesis. The protein is Probable L-tyrosine/L-aspartate decarboxylase of Methanocorpusculum labreanum (strain ATCC 43576 / DSM 4855 / Z).